The primary structure comprises 67 residues: MKVRLDPSRCVGHAQCYAVDPDLFPIDDSGNSILAEHEVRPEDMQLTRDGVAACPEMALILEEDDAD.

Residues cysteine 10, valine 11, glutamine 15, cysteine 16, and cysteine 54 each contribute to the [3Fe-4S] cluster site.

As to quaternary structure, interacts with the cytochrome P450 143 with high affinity (Kd=84 nM). The cofactor is [3Fe-4S] cluster.

Its function is as follows. Ferredoxin that is the redox partner of cytochrome CYP143, a cytochrome P450 encoded by an adjacent gene. The sequence is that of Ferredoxin FdxE from Mycobacterium tuberculosis (strain ATCC 25618 / H37Rv).